Consider the following 503-residue polypeptide: uncharacterized protein (503 aa).

Belongs to the Mg-chelatase subunits D/I family. ComM subfamily.

This is an uncharacterized protein from Mycobacterium bovis (strain ATCC BAA-935 / AF2122/97).